The following is a 190-amino-acid chain: MVKGLEKFNELVESFANLPTIGKKTAIRLAYHLCINNQIDGMKLAHNIENAIRFIKPCEQCGALSENELCEICSDEERNKNILCIVESPKDILTLEESQSYNGLYFVLDELNEEKLEKLKQIILKLNISELIFALTHSINSDATIFFIEDKFKGLNLTFSKIAQGIPSGVNLENVDLISLNKAMNFRTKI.

The C4-type zinc finger occupies Cys-58–Cys-73. The 87-residue stretch at Asn-81–Pro-167 folds into the Toprim domain.

This sequence belongs to the RecR family.

May play a role in DNA repair. It seems to be involved in an RecBC-independent recombinational process of DNA repair. It may act with RecF and RecO. This Campylobacter jejuni subsp. jejuni serotype O:23/36 (strain 81-176) protein is Recombination protein RecR.